A 375-amino-acid polypeptide reads, in one-letter code: Queuine tRNA-ribosyltransferase (375 aa).

The active-site Proton acceptor is Asp-94. Residues 94 to 98, Asp-148, Gln-191, and Gly-218 contribute to the substrate site; that span reads DSGGF. The tract at residues 249 to 255 is RNA binding; it reads GVGSPDD. Asp-268 serves as the catalytic Nucleophile. The interval 273 to 277 is RNA binding; important for wobble base 34 recognition; the sequence is TRIAR. Positions 306, 308, 311, and 337 each coordinate Zn(2+).

Belongs to the queuine tRNA-ribosyltransferase family. In terms of assembly, homodimer. Within each dimer, one monomer is responsible for RNA recognition and catalysis, while the other monomer binds to the replacement base PreQ1. Requires Zn(2+) as cofactor.

The enzyme catalyses 7-aminomethyl-7-carbaguanine + guanosine(34) in tRNA = 7-aminomethyl-7-carbaguanosine(34) in tRNA + guanine. It functions in the pathway tRNA modification; tRNA-queuosine biosynthesis. Functionally, catalyzes the base-exchange of a guanine (G) residue with the queuine precursor 7-aminomethyl-7-deazaguanine (PreQ1) at position 34 (anticodon wobble position) in tRNAs with GU(N) anticodons (tRNA-Asp, -Asn, -His and -Tyr). Catalysis occurs through a double-displacement mechanism. The nucleophile active site attacks the C1' of nucleotide 34 to detach the guanine base from the RNA, forming a covalent enzyme-RNA intermediate. The proton acceptor active site deprotonates the incoming PreQ1, allowing a nucleophilic attack on the C1' of the ribose to form the product. After dissociation, two additional enzymatic reactions on the tRNA convert PreQ1 to queuine (Q), resulting in the hypermodified nucleoside queuosine (7-(((4,5-cis-dihydroxy-2-cyclopenten-1-yl)amino)methyl)-7-deazaguanosine). The protein is Queuine tRNA-ribosyltransferase of Thermoanaerobacter pseudethanolicus (strain ATCC 33223 / 39E) (Clostridium thermohydrosulfuricum).